A 427-amino-acid polypeptide reads, in one-letter code: Succinate--CoA ligase [ADP-forming] subunit beta, mitochondrial (427 aa).

The transit peptide at 1–30 (MYSRKSLSLISKCGQLSRLNAQAALQARRH) directs the protein to the mitochondrion. Residues 39-284 (AQLLREYGIG…LSQEDPDEVK (246 aa)) form the ATP-grasp domain. ATP contacts are provided by residues Lys-76 and 83-85 (GRG). The residue at position 102 (Ser-102) is a Phosphoserine. An ATP-binding site is contributed by Glu-144. Mg(2+) is bound by residues Asn-236 and Asp-253. Ser-263 and Ser-276 each carry phosphoserine. Residues Asn-304 and 361–363 (GIV) each bind substrate.

The protein belongs to the succinate/malate CoA ligase beta subunit family. In terms of assembly, heterodimer of an alpha and a beta subunit. Mg(2+) serves as cofactor.

It localises to the mitochondrion. The enzyme catalyses succinate + ATP + CoA = succinyl-CoA + ADP + phosphate. The protein operates within carbohydrate metabolism; tricarboxylic acid cycle; succinate from succinyl-CoA (ligase route): step 1/1. Succinyl-CoA synthetase functions in the citric acid cycle (TCA), coupling the hydrolysis of succinyl-CoA to the synthesis of ATP and thus represents the only step of substrate-level phosphorylation in the TCA. The beta subunit provides nucleotide specificity of the enzyme and binds the substrate succinate, while the binding sites for coenzyme A and phosphate are found in the alpha subunit. This chain is Succinate--CoA ligase [ADP-forming] subunit beta, mitochondrial, found in Saccharomyces cerevisiae (strain ATCC 204508 / S288c) (Baker's yeast).